Reading from the N-terminus, the 311-residue chain is HPr kinase/phosphorylase (311 aa).

Catalysis depends on residues His-139 and Lys-160. 154–161 lines the ATP pocket; sequence GQSGVGKS. A Mg(2+)-binding site is contributed by Ser-161. The Proton acceptor; for phosphorylation activity. Proton donor; for dephosphorylation activity role is filled by Asp-178. Residues 202–211 form an important for the catalytic mechanism of both phosphorylation and dephosphorylation region; that stretch reads LEIRGIGIID. Glu-203 is a binding site for Mg(2+). Residue Arg-244 is part of the active site. The interval 265 to 270 is important for the catalytic mechanism of dephosphorylation; sequence PVRPGR.

This sequence belongs to the HPrK/P family. Homohexamer. The cofactor is Mg(2+).

The enzyme catalyses [HPr protein]-L-serine + ATP = [HPr protein]-O-phospho-L-serine + ADP + H(+). It carries out the reaction [HPr protein]-O-phospho-L-serine + phosphate + H(+) = [HPr protein]-L-serine + diphosphate. In terms of biological role, catalyzes the ATP- as well as the pyrophosphate-dependent phosphorylation of a specific serine residue in HPr, a phosphocarrier protein of the phosphoenolpyruvate-dependent sugar phosphotransferase system (PTS). HprK/P also catalyzes the pyrophosphate-producing, inorganic phosphate-dependent dephosphorylation (phosphorolysis) of seryl-phosphorylated HPr (P-Ser-HPr). The two antagonistic activities of HprK/P are regulated by several intracellular metabolites, which change their concentration in response to the absence or presence of rapidly metabolisable carbon sources (glucose, fructose, etc.) in the growth medium. Therefore, by controlling the phosphorylation state of HPr, HPrK/P is a sensor enzyme that plays a major role in the regulation of carbon metabolism and sugar transport: it mediates carbon catabolite repression (CCR), and regulates PTS-catalyzed carbohydrate uptake and inducer exclusion. The chain is HPr kinase/phosphorylase from Exiguobacterium sp. (strain ATCC BAA-1283 / AT1b).